The primary structure comprises 606 residues: Proton myo-inositol cotransporter hmit-1.1 (606 aa).

Residues 1–20 (MVAVAAFSSSGQDKPAHTPK) lie on the Cytoplasmic side of the membrane. Residues 21–41 (LGLFVYILAAASVIGGFLFGY) form a helical membrane-spanning segment. Topologically, residues 42-63 (DTSVVSAAMLYMPDAPGLKPMD) are extracellular. A helical transmembrane segment spans residues 64 to 84 (TVWQEVLVSISPGMAAVGSLM). The Cytoplasmic segment spans residues 85–96 (SGTSSDYIGRRK). The helical transmembrane segment at 97–117 (VILGASAIFTIGALVCAASVN) threads the bilayer. Lys-118 is a topological domain (extracellular). The chain crosses the membrane as a helical span at residues 119–139 (IMLLVGRVLLGIAIGFASMIV). The Cytoplasmic segment spans residues 140–152 (PVYLGETAPTHVR). Residues 153-173 (GMLVAAFALMISFGQVVANIT) traverse the membrane as a helical segment. Topologically, residues 174 to 188 (GGAFSYIDPYNVGWR) are extracellular. The helical transmembrane segment at 189 to 209 (LMFAFAAVPSIIQFVCFMFLP) threads the bilayer. Residues 210-278 (ETPRWLYENG…RILKTPHVLK (69 aa)) lie on the Cytoplasmic side of the membrane. A helical transmembrane segment spans residues 279–299 (ACFIGSMLQAFQQLAGINTIL). Over 300–317 (YYTADIIRSSGISNNHTT) the chain is Extracellular. Asn-314 carries N-linked (GlcNAc...) asparagine glycosylation. Residues 318–338 (IWISVLLSLCNFIGPFVPMSL) form a helical membrane-spanning segment. Residues 339–345 (IEKVGRR) lie on the Cytoplasmic side of the membrane. The chain crosses the membrane as a helical span at residues 346-366 (IIFLFSCGLVVLSLVFIGVAF). The Extracellular segment spans residues 367-464 (LLVNHDSAAT…EKYYCDTKYT (98 aa)). N-linked (GlcNAc...) asparagine glycosylation is found at Asn-387 and Asn-445. Residues 465–485 (LLPIIACGVYLLTFSSGFTSL) traverse the membrane as a helical segment. The Cytoplasmic segment spans residues 486-501 (PWVLNSEFYPMWARST). A helical membrane pass occupies residues 502–522 (CVAISTTSNWVFNLIIALTYL). Residues 523–531 (SLTQVIGKY) are Extracellular-facing. A helical membrane pass occupies residues 532-552 (GAFWLYAGLTVIAFIFILFLV). Topologically, residues 553 to 606 (PETKGYSIEEVEMLFMNKKQRREAESRRRETVTEVRSRMNSTVSFGQHNEVHKY) are cytoplasmic.

This sequence belongs to the major facilitator superfamily. Sugar transporter (TC 2.A.1.1) family. Expressed in the intestine.

It localises to the cell membrane. The catalysed reaction is myo-inositol(out) + H(+)(out) = myo-inositol(in) + H(+)(in). Its function is as follows. H(+)-myo-inositol cotransporter. Probably by promoting the transport of myo-inositol regulates intracellular osmosis in response to hyperosmotic stress. This chain is Proton myo-inositol cotransporter hmit-1.1, found in Caenorhabditis elegans.